Reading from the N-terminus, the 715-residue chain is L-type lectin-domain containing receptor kinase VIII.1 (715 aa).

An N-terminal signal peptide occupies residues 1 to 21 (MSLFLSFFISILLCFFNGATT). Residues 22 to 247 (TQFDFSTLAI…IHSIEWWSFS (226 aa)) form a legume-lectin like region. Over 22-317 (TQFDFSTLAI…SRFCKENPGT (296 aa)) the chain is Extracellular. Residues N126 and N195 are each glycosylated (N-linked (GlcNAc...) asparagine). Residues 255–296 (GSGSGSPPPRANLMNPKANSVKSPPPLASQPSSSAIPISSNT) form a disordered region. Positions 283-296 (SQPSSSAIPISSNT) are enriched in low complexity. Residues 318–338 (IAGVVTAGAFFLALFAGALFW) form a helical membrane-spanning segment. Over 339 to 715 (VYSKKFKRVE…IIRSDDDHLV (377 aa)) the chain is Cytoplasmic. One can recognise a Protein kinase domain in the interval 376 to 676 (FNESRIIGHG…MSFSTSHLLL (301 aa)). ATP is bound by residues 382–390 (IGHGAFGVV) and K405. The Proton acceptor role is filled by D500.

This sequence in the C-terminal section; belongs to the protein kinase superfamily. Ser/Thr protein kinase family. The protein in the N-terminal section; belongs to the leguminous lectin family.

Its subcellular location is the cell membrane. It carries out the reaction L-seryl-[protein] + ATP = O-phospho-L-seryl-[protein] + ADP + H(+). The catalysed reaction is L-threonyl-[protein] + ATP = O-phospho-L-threonyl-[protein] + ADP + H(+). The protein is L-type lectin-domain containing receptor kinase VIII.1 (LECRK81) of Arabidopsis thaliana (Mouse-ear cress).